Consider the following 1441-residue polypeptide: Gag-Pol polyprotein (1441 aa).

G2 carries N-myristoyl glycine; by host lipidation. Residues 7–31 (VLSGGELDRWENIRLRPGGKKKYKL) are interaction with Gp41. Positions 8–43 (LSGGELDRWENIRLRPGGKKKYKLKHVVWASRELER) are interaction with host CALM1. Residues 12–19 (ELDRWENI) form an interaction with host AP3D1 region. Positions 14–33 (DRWENIRLRPGGKKKYKLKH) are interaction with membrane phosphatidylinositol 4,5-bisphosphate and RNA. Residues 16-22 (WENIRLR) carry the Nuclear export signal motif. The short motif at 26–32 (KKKYKLK) is the Nuclear localization signal element. Residues 73–77 (EELKS) are interaction with membrane phosphatidylinositol 4,5-bisphosphate. The segment at 106-131 (EEQNKSKKKAQQAAADTGNRGNSSQV) is disordered. Y135 bears the Phosphotyrosine; by host mark. The segment at 192–230 (NTVGGHQAAMQMLKETINEEAAEWDRLHPVHAGPITPGQ) is interaction with human PPIA/CYPA and NUP153. Residues 280–366 (YSPSSILDIR…GGPGHKARVL (87 aa)) are dimerization/Multimerization of capsid protein p24. 2 consecutive CCHC-type zinc fingers follow at residues 393–410 (IKCF…NCRA) and 414–431 (RGCW…DCTE). Positions 451–460 (SSEQNRANSP) are enriched in polar residues. The interval 451-489 (SSEQNRANSPTRRELQVWGRDNNSLSEAGEEAGDDRQGP) is disordered. A dimerization of protease region spans residues 495-499 (PQITL). A Peptidase A2 domain is found at 514-583 (KEALLDTGAD…TPVNIIGRNL (70 aa)). Catalysis depends on D519, which acts as the For protease activity; shared with dimeric partner. 2 dimerization of protease regions span residues 543–549 (GIGGFIK) and 582–594 (NLLT…LNFP). Positions 637–827 (EGKISKIGPE…PPFLWMGYEL (191 aa)) constitute a Reverse transcriptase domain. Mg(2+)-binding residues include D703, D778, and D779. The segment at 820-828 (FLWMGYELH) is RT 'primer grip'. The short motif at 991-1007 (WETWWTEYTXATWIPEW) is the Tryptophan repeat motif element. The RNase H type-1 domain maps to 1027 to 1150 (IVGAETFYVD…VDKLVSAGIR (124 aa)). Mg(2+) contacts are provided by D1036, E1071, D1091, and D1142. The Integrase-type zinc finger occupies 1156 to 1197 (DGIDKAQEDHEKYHSNWRAMASDFNLPPIVAKEIVASCDKCQ). Positions 1165, 1169, 1193, and 1196 each coordinate Zn(2+). Positions 1207 to 1357 (VDCSPGIWQL…SAGERIVGII (151 aa)) constitute an Integrase catalytic domain. 3 residues coordinate Mg(2+): D1217, D1269, and E1305. The integrase-type DNA-binding region spans 1376-1423 (FRVYYRDSRDPLWKGPAKLLWKGEGAVVIQDNNDIKVVPRRKAKVIRD).

In terms of assembly, homotrimer; further assembles as hexamers of trimers. Interacts with gp41 (via C-terminus). Interacts with host CALM1; this interaction induces a conformational change in the Matrix protein, triggering exposure of the myristate group. Interacts with host AP3D1; this interaction allows the polyprotein trafficking to multivesicular bodies during virus assembly. Part of the pre-integration complex (PIC) which is composed of viral genome, matrix protein, Vpr and integrase. Homodimer; the homodimer further multimerizes as homohexamers or homopentamers. Interacts with human PPIA/CYPA; This interaction stabilizes the capsid. Interacts with human NUP153. Interacts with host PDZD8; this interaction stabilizes the capsid. Interacts with monkey TRIM5; this interaction destabilizes the capsid. As to quaternary structure, homodimer, whose active site consists of two apposed aspartic acid residues. In terms of assembly, heterodimer of p66 RT and p51 RT (RT p66/p51). Heterodimerization of RT is essential for DNA polymerase activity. The overall folding of the subdomains is similar in p66 RT and p51 RT but the spatial arrangements of the subdomains are dramatically different. Homotetramer; may further associate as a homohexadecamer. Part of the pre-integration complex (PIC) which is composed of viral genome, matrix protein, Vpr and integrase. Interacts with human SMARCB1/INI1 and human PSIP1/LEDGF isoform 1. Interacts with human KPNA3; this interaction might play a role in nuclear import of the pre-integration complex. Interacts with human NUP153; this interaction might play a role in nuclear import of the pre-integration complex. The cofactor is Mg(2+). Post-translationally, specific enzymatic cleavages by the viral protease yield mature proteins. The protease is released by autocatalytic cleavage. The polyprotein is cleaved during and after budding, this process is termed maturation. Proteolytic cleavage of p66 RT removes the RNase H domain to yield the p51 RT subunit. Nucleocapsid protein p7 might be further cleaved after virus entry. Tyrosine phosphorylated presumably in the virion by a host kinase. Phosphorylation is apparently not a major regulator of membrane association. In terms of processing, phosphorylated possibly by host MAPK1; this phosphorylation is necessary for Pin1-mediated virion uncoating. Post-translationally, methylated by host PRMT6, impairing its function by reducing RNA annealing and the initiation of reverse transcription.

It localises to the host cell membrane. Its subcellular location is the host endosome. It is found in the host multivesicular body. The protein resides in the virion membrane. The protein localises to the host nucleus. It localises to the host cytoplasm. Its subcellular location is the virion. It catalyses the reaction Specific for a P1 residue that is hydrophobic, and P1' variable, but often Pro.. The catalysed reaction is Endohydrolysis of RNA in RNA/DNA hybrids. Three different cleavage modes: 1. sequence-specific internal cleavage of RNA. Human immunodeficiency virus type 1 and Moloney murine leukemia virus enzymes prefer to cleave the RNA strand one nucleotide away from the RNA-DNA junction. 2. RNA 5'-end directed cleavage 13-19 nucleotides from the RNA end. 3. DNA 3'-end directed cleavage 15-20 nucleotides away from the primer terminus.. The enzyme catalyses 3'-end directed exonucleolytic cleavage of viral RNA-DNA hybrid.. It carries out the reaction DNA(n) + a 2'-deoxyribonucleoside 5'-triphosphate = DNA(n+1) + diphosphate. With respect to regulation, protease: The viral protease is inhibited by many synthetic protease inhibitors (PIs), such as amprenavir, atazanavir, indinavir, loprinavir, nelfinavir, ritonavir and saquinavir. Use of protease inhibitors in tritherapy regimens permit more ambitious therapeutic strategies. Reverse transcriptase/ribonuclease H: RT can be inhibited either by nucleoside RT inhibitors (NRTIs) or by non nucleoside RT inhibitors (NNRTIs). NRTIs act as chain terminators, whereas NNRTIs inhibit DNA polymerization by binding a small hydrophobic pocket near the RT active site and inducing an allosteric change in this region. Classical NRTIs are abacavir, adefovir (PMEA), didanosine (ddI), lamivudine (3TC), stavudine (d4T), tenofovir (PMPA), zalcitabine (ddC), and zidovudine (AZT). Classical NNRTIs are atevirdine (BHAP U-87201E), delavirdine, efavirenz (DMP-266), emivirine (I-EBU), and nevirapine (BI-RG-587). The tritherapies used as a basic effective treatment of AIDS associate two NRTIs and one NNRTI. Mediates, with Gag polyprotein, the essential events in virion assembly, including binding the plasma membrane, making the protein-protein interactions necessary to create spherical particles, recruiting the viral Env proteins, and packaging the genomic RNA via direct interactions with the RNA packaging sequence (Psi). Gag-Pol polyprotein may regulate its own translation, by the binding genomic RNA in the 5'-UTR. At low concentration, the polyprotein would promote translation, whereas at high concentration, the polyprotein would encapsidate genomic RNA and then shut off translation. In terms of biological role, targets the polyprotein to the plasma membrane via a multipartite membrane-binding signal, that includes its myristoylated N-terminus. Matrix protein is part of the pre-integration complex. Implicated in the release from host cell mediated by Vpu. Binds to RNA. Its function is as follows. Forms the conical core that encapsulates the genomic RNA-nucleocapsid complex in the virion. Most core are conical, with only 7% tubular. The core is constituted by capsid protein hexamer subunits. The core is disassembled soon after virion entry. Host restriction factors such as TRIM5-alpha or TRIMCyp bind retroviral capsids and cause premature capsid disassembly, leading to blocks in reverse transcription. Capsid restriction by TRIM5 is one of the factors which restricts HIV-1 to the human species. Host PIN1 apparently facilitates the virion uncoating. On the other hand, interactions with PDZD8 or CYPA stabilize the capsid. Functionally, encapsulates and protects viral dimeric unspliced genomic RNA (gRNA). Binds these RNAs through its zinc fingers. Acts as a nucleic acid chaperone which is involved in rearangement of nucleic acid secondary structure during gRNA retrotranscription. Also facilitates template switch leading to recombination. As part of the polyprotein, participates in gRNA dimerization, packaging, tRNA incorporation and virion assembly. Aspartyl protease that mediates proteolytic cleavages of Gag and Gag-Pol polyproteins during or shortly after the release of the virion from the plasma membrane. Cleavages take place as an ordered, step-wise cascade to yield mature proteins. This process is called maturation. Displays maximal activity during the budding process just prior to particle release from the cell. Also cleaves Nef and Vif, probably concomitantly with viral structural proteins on maturation of virus particles. Hydrolyzes host EIF4GI and PABP1 in order to shut off the capped cellular mRNA translation. The resulting inhibition of cellular protein synthesis serves to ensure maximal viral gene expression and to evade host immune response. Also mediates cleavage of host YTHDF3. Mediates cleavage of host CARD8, thereby activating the CARD8 inflammasome, leading to the clearance of latent HIV-1 in patient CD4(+) T-cells after viral reactivation; in contrast, HIV-1 can evade CARD8-sensing when its protease remains inactive in infected cells prior to viral budding. In terms of biological role, multifunctional enzyme that converts the viral RNA genome into dsDNA in the cytoplasm, shortly after virus entry into the cell. This enzyme displays a DNA polymerase activity that can copy either DNA or RNA templates, and a ribonuclease H (RNase H) activity that cleaves the RNA strand of RNA-DNA heteroduplexes in a partially processive 3' to 5' endonucleasic mode. Conversion of viral genomic RNA into dsDNA requires many steps. A tRNA(3)-Lys binds to the primer-binding site (PBS) situated at the 5'-end of the viral RNA. RT uses the 3' end of the tRNA primer to perform a short round of RNA-dependent minus-strand DNA synthesis. The reading proceeds through the U5 region and ends after the repeated (R) region which is present at both ends of viral RNA. The portion of the RNA-DNA heteroduplex is digested by the RNase H, resulting in a ssDNA product attached to the tRNA primer. This ssDNA/tRNA hybridizes with the identical R region situated at the 3' end of viral RNA. This template exchange, known as minus-strand DNA strong stop transfer, can be either intra- or intermolecular. RT uses the 3' end of this newly synthesized short ssDNA to perform the RNA-dependent minus-strand DNA synthesis of the whole template. RNase H digests the RNA template except for two polypurine tracts (PPTs) situated at the 5'-end and near the center of the genome. It is not clear if both polymerase and RNase H activities are simultaneous. RNase H probably can proceed both in a polymerase-dependent (RNA cut into small fragments by the same RT performing DNA synthesis) and a polymerase-independent mode (cleavage of remaining RNA fragments by free RTs). Secondly, RT performs DNA-directed plus-strand DNA synthesis using the PPTs that have not been removed by RNase H as primers. PPTs and tRNA primers are then removed by RNase H. The 3' and 5' ssDNA PBS regions hybridize to form a circular dsDNA intermediate. Strand displacement synthesis by RT to the PBS and PPT ends produces a blunt ended, linear dsDNA copy of the viral genome that includes long terminal repeats (LTRs) at both ends. Its function is as follows. Catalyzes viral DNA integration into the host chromosome, by performing a series of DNA cutting and joining reactions. This enzyme activity takes place after virion entry into a cell and reverse transcription of the RNA genome in dsDNA. The first step in the integration process is 3' processing. This step requires a complex comprising the viral genome, matrix protein, Vpr and integrase. This complex is called the pre-integration complex (PIC). The integrase protein removes 2 nucleotides from each 3' end of the viral DNA, leaving recessed CA OH's at the 3' ends. In the second step, the PIC enters cell nucleus. This process is mediated through integrase and Vpr proteins, and allows the virus to infect a non dividing cell. This ability to enter the nucleus is specific of lentiviruses, other retroviruses cannot and rely on cell division to access cell chromosomes. In the third step, termed strand transfer, the integrase protein joins the previously processed 3' ends to the 5' ends of strands of target cellular DNA at the site of integration. The 5'-ends are produced by integrase-catalyzed staggered cuts, 5 bp apart. A Y-shaped, gapped, recombination intermediate results, with the 5'-ends of the viral DNA strands and the 3' ends of target DNA strands remaining unjoined, flanking a gap of 5 bp. The last step is viral DNA integration into host chromosome. This involves host DNA repair synthesis in which the 5 bp gaps between the unjoined strands are filled in and then ligated. Since this process occurs at both cuts flanking the HIV genome, a 5 bp duplication of host DNA is produced at the ends of HIV-1 integration. Alternatively, Integrase may catalyze the excision of viral DNA just after strand transfer, this is termed disintegration. The sequence is that of Gag-Pol polyprotein (gag-pol) from Human immunodeficiency virus type 1 group M subtype B (isolate MN) (HIV-1).